The primary structure comprises 665 residues: DNA ligase (665 aa).

Residues 34–38 (DEEYD), 83–84 (SL), and Glu114 each bind NAD(+). Lys116 (N6-AMP-lysine intermediate) is an active-site residue. The NAD(+) site is built by Arg137, Glu171, Lys287, and Lys311. 4 residues coordinate Zn(2+): Cys405, Cys408, Cys424, and Cys429. The region spanning 587–665 (KKSSKLAGLT…EDEFKKMIID (79 aa)) is the BRCT domain.

This sequence belongs to the NAD-dependent DNA ligase family. LigA subfamily. Mg(2+) serves as cofactor. Requires Mn(2+) as cofactor.

The catalysed reaction is NAD(+) + (deoxyribonucleotide)n-3'-hydroxyl + 5'-phospho-(deoxyribonucleotide)m = (deoxyribonucleotide)n+m + AMP + beta-nicotinamide D-nucleotide.. DNA ligase that catalyzes the formation of phosphodiester linkages between 5'-phosphoryl and 3'-hydroxyl groups in double-stranded DNA using NAD as a coenzyme and as the energy source for the reaction. It is essential for DNA replication and repair of damaged DNA. The polypeptide is DNA ligase (Thermosipho africanus (strain TCF52B)).